A 297-amino-acid polypeptide reads, in one-letter code: Putative 6-phosphogluconate dehydrogenase YqeC (297 aa).

NAD(+) contacts are provided by residues 7 to 12 and asparagine 94; that span reads GLGKMG. Substrate-binding positions include asparagine 94 and 120-122; that span reads SGG. Lysine 170 functions as the Proton acceptor in the catalytic mechanism. Position 173-174 (173-174) interacts with substrate; it reads HN. Residue glutamate 177 is the Proton donor of the active site. Substrate contacts are provided by tyrosine 178 and arginine 268.

It belongs to the 6-phosphogluconate dehydrogenase family.

Its function is as follows. May act as NAD-dependent 6-P-gluconate dehydrogenase. The polypeptide is Putative 6-phosphogluconate dehydrogenase YqeC (yqeC) (Bacillus subtilis (strain 168)).